Consider the following 134-residue polypeptide: Perlwapin (134 aa).

3 consecutive WAP domains span residues 2–45, 46–89, and 90–132; these read GPNL…CVPK, PKPG…YRPE, and KPGS…EKPC. 12 disulfide bridges follow: Cys8/Cys34, Cys17/Cys38, Cys21/Cys33, Cys27/Cys42, Cys51/Cys77, Cys59/Cys82, Cys64/Cys76, Cys70/Cys85, Cys94/Cys121, Cys104/Cys124, Cys108/Cys120, and Cys114/Cys128.

Nacreous layer of shell.

Its function is as follows. Inhibits growth of calcium carbonate crystals. May inhibit growth of certain crystallographic planes in the mineral phase of nacre in the shell. The chain is Perlwapin from Haliotis laevigata (Smooth Australian abalone).